A 320-amino-acid chain; its full sequence is Cytochrome f (320 aa).

Positions 1 to 35 (MQNRNTFSWVKEQMTRSIFVSMMIYIITRASISNA) are cleaved as a signal peptide. Heme-binding residues include Tyr-36, Cys-56, Cys-59, and His-60. A helical transmembrane segment spans residues 286–306 (IQGLFLFLASVILAQIFLVLK).

The protein belongs to the cytochrome f family. The 4 large subunits of the cytochrome b6-f complex are cytochrome b6, subunit IV (17 kDa polypeptide, petD), cytochrome f and the Rieske protein, while the 4 small subunits are PetG, PetL, PetM and PetN. The complex functions as a dimer. Heme is required as a cofactor.

It is found in the plastid. Its subcellular location is the chloroplast thylakoid membrane. Its function is as follows. Component of the cytochrome b6-f complex, which mediates electron transfer between photosystem II (PSII) and photosystem I (PSI), cyclic electron flow around PSI, and state transitions. The chain is Cytochrome f from Amborella trichopoda.